A 318-amino-acid chain; its full sequence is Myeloid-associated differentiation marker (318 aa).

MARVEL domains are found at residues 25 to 157 (ALTQ…ARPG) and 162 to 315 (YMAT…RLVF). 8 helical membrane passes run 35 to 55 (LLQLVSTCVAFSLVASVGAWT), 58 to 78 (MGNWAMFTWCFCFAVTLIILI), 95 to 115 (FPITFACYAALFCLSSSIIYP), 131 to 151 (AIAATTFSCVACLAYATEVAW), 165 to 185 (TVPGLLKVFETFVACIIFAFI), 197 to 217 (LEWCVAVYAICFILAAVTVLL), 233 to 253 (FLSGLALLSVLLYATAIVLWP), and 290 to 310 (LAVSILTGINLLAYVSDLVYS).

It belongs to the MAL family.

It is found in the membrane. The chain is Myeloid-associated differentiation marker (Myadm) from Rattus norvegicus (Rat).